Consider the following 332-residue polypeptide: Probable cation efflux system protein MT2084 (332 aa).

Helical transmembrane passes span 46 to 66, 75 to 95, 113 to 133, 145 to 165, and 202 to 222; these read ISLL…VMSG, IHNF…ALGA, AGSF…YEAI, VGWV…VALY, and VALG…AAIL.

It belongs to the cation diffusion facilitator (CDF) transporter (TC 2.A.4) family.

It is found in the cell membrane. The protein is Probable cation efflux system protein MT2084 of Mycobacterium tuberculosis (strain CDC 1551 / Oshkosh).